We begin with the raw amino-acid sequence, 120 residues long: NAD(P)H-quinone oxidoreductase subunit 3, chloroplastic (120 aa).

3 helical membrane passes run 9–29, 64–84, and 88–108; these read IFWV…LISG, MFAL…PWAM, and VLGV…IVGL.

This sequence belongs to the complex I subunit 3 family. In terms of assembly, NDH is composed of at least 16 different subunits, 5 of which are encoded in the nucleus.

Its subcellular location is the plastid. It localises to the chloroplast thylakoid membrane. It carries out the reaction a plastoquinone + NADH + (n+1) H(+)(in) = a plastoquinol + NAD(+) + n H(+)(out). It catalyses the reaction a plastoquinone + NADPH + (n+1) H(+)(in) = a plastoquinol + NADP(+) + n H(+)(out). In terms of biological role, NDH shuttles electrons from NAD(P)H:plastoquinone, via FMN and iron-sulfur (Fe-S) centers, to quinones in the photosynthetic chain and possibly in a chloroplast respiratory chain. The immediate electron acceptor for the enzyme in this species is believed to be plastoquinone. Couples the redox reaction to proton translocation, and thus conserves the redox energy in a proton gradient. The chain is NAD(P)H-quinone oxidoreductase subunit 3, chloroplastic from Cucumis sativus (Cucumber).